A 574-amino-acid chain; its full sequence is Sulfate adenylyltransferase (574 aa).

The interval 1–170 (MANAPHGGVL…VQAVSKPAYY (170 aa)) is N-terminal. The tract at residues 171-395 (DYVALRYTPA…LRESYPPKAK (225 aa)) is catalytic. Residue Q198 participates in sulfate binding. Residues 198–201 (QTRN) and 292–295 (GRDH) contribute to the ATP site. Catalysis depends on residues T199, R200, and N201. R200 is a binding site for sulfate. A sulfate-binding site is contributed by A296. M334 contributes to the ATP binding site. Residues 396-574 (QGFTLFLTGL…ILLLEAQSLI (179 aa)) are allosteric regulation domain; adenylyl-sulfate kinase-like. 3'-phosphoadenylyl sulfate is bound by residues 435 to 438 (ETVR), R452, 478 to 479 (IA), and K519.

It in the N-terminal section; belongs to the sulfate adenylyltransferase family. This sequence in the C-terminal section; belongs to the APS kinase family. Homohexamer. Dimer of trimers.

The protein resides in the cytoplasm. It catalyses the reaction sulfate + ATP + H(+) = adenosine 5'-phosphosulfate + diphosphate. Its pathway is sulfur metabolism; hydrogen sulfide biosynthesis; sulfite from sulfate: step 1/3. Its activity is regulated as follows. Allosterically inhibited by 3'-phosphoadenosine 5'-phosphosulfate (PAPS). Its function is as follows. Catalyzes the first intracellular reaction of sulfate assimilation, forming adenosine-5'-phosphosulfate (APS) from inorganic sulfate and ATP. Plays an important role in sulfate activation as a component of the biosynthesis pathway of sulfur-containing amino acids. The chain is Sulfate adenylyltransferase from Mycosarcoma maydis (Corn smut fungus).